Consider the following 354-residue polypeptide: NADH-quinone oxidoreductase subunit H (354 aa).

8 helical membrane-spanning segments follow: residues 22–42 (ILIR…YLIL), 91–111 (YLVA…VIPF), 124–144 (LLYV…AGWA), 162–182 (VSYE…SGSL), 203–223 (LLSW…ISGV), 250–270 (GMTF…ISTM), 291–311 (IPGF…FIWI), and 326–346 (LGWK…AIWI).

This sequence belongs to the complex I subunit 1 family. As to quaternary structure, NDH-1 is composed of 14 different subunits. Subunits NuoA, H, J, K, L, M, N constitute the membrane sector of the complex.

It localises to the cell inner membrane. It carries out the reaction a quinone + NADH + 5 H(+)(in) = a quinol + NAD(+) + 4 H(+)(out). Its function is as follows. NDH-1 shuttles electrons from NADH, via FMN and iron-sulfur (Fe-S) centers, to quinones in the respiratory chain. The immediate electron acceptor for the enzyme in this species is believed to be ubiquinone. Couples the redox reaction to proton translocation (for every two electrons transferred, four hydrogen ions are translocated across the cytoplasmic membrane), and thus conserves the redox energy in a proton gradient. This subunit may bind ubiquinone. The polypeptide is NADH-quinone oxidoreductase subunit H (Cupriavidus metallidurans (strain ATCC 43123 / DSM 2839 / NBRC 102507 / CH34) (Ralstonia metallidurans)).